A 59-amino-acid chain; its full sequence is Large ribosomal subunit protein uL30 (59 aa).

The protein belongs to the universal ribosomal protein uL30 family. Part of the 50S ribosomal subunit.

In Edwardsiella ictaluri (strain 93-146), this protein is Large ribosomal subunit protein uL30.